The following is a 239-amino-acid chain: Purine nucleoside phosphorylase DeoD-type (239 aa).

An a purine D-ribonucleoside-binding site is contributed by histidine 5. Phosphate-binding positions include glycine 21, arginine 25, arginine 44, and 88–91; that span reads RVGS. A purine D-ribonucleoside contacts are provided by residues 180-182 and 204-205; these read EME and SD. Catalysis depends on aspartate 205, which acts as the Proton donor.

The protein belongs to the PNP/UDP phosphorylase family. In terms of assembly, homohexamer; trimer of homodimers.

It catalyses the reaction a purine D-ribonucleoside + phosphate = a purine nucleobase + alpha-D-ribose 1-phosphate. The catalysed reaction is a purine 2'-deoxy-D-ribonucleoside + phosphate = a purine nucleobase + 2-deoxy-alpha-D-ribose 1-phosphate. Catalyzes the reversible phosphorolytic breakdown of the N-glycosidic bond in the beta-(deoxy)ribonucleoside molecules, with the formation of the corresponding free purine bases and pentose-1-phosphate. This is Purine nucleoside phosphorylase DeoD-type from Salmonella heidelberg (strain SL476).